A 327-amino-acid polypeptide reads, in one-letter code: MSTATFTLGIVGARGYTGAALITLLTAHPAIELIFVSSREYHGQPVAAHNPTYCGDLRFETLDPAAVAAKRADVVILALPNGNAAPYVHAIDATAPPTLIIDLSADTRFDPDWYYGLPELTRHTYTGQKRISNPGCYATAMQLAIAPLRDQLAGPPQCFGVSGYSGAGTTPSDKNNQALLRDNLMPYALTDHLHEREVSAQLGIPVEFMPHVAPHFRGITLTANLWLQRPLTREHIKTLYATRYANDPLIDIIDPPPWVNQIAARHTVQIGAFTMAPGNKRVVIVATLDNLLKGAATQALQNLNRALGLDELTAIPYQPNPVPSPIP.

The active site involves Cys-136.

The protein belongs to the NAGSA dehydrogenase family. Type 1 subfamily.

The protein localises to the cytoplasm. The enzyme catalyses N-acetyl-L-glutamate 5-semialdehyde + phosphate + NADP(+) = N-acetyl-L-glutamyl 5-phosphate + NADPH + H(+). The protein operates within amino-acid biosynthesis; L-arginine biosynthesis; N(2)-acetyl-L-ornithine from L-glutamate: step 3/4. Its function is as follows. Catalyzes the NADPH-dependent reduction of N-acetyl-5-glutamyl phosphate to yield N-acetyl-L-glutamate 5-semialdehyde. This is N-acetyl-gamma-glutamyl-phosphate reductase from Xylella fastidiosa (strain M23).